Here is a 105-residue protein sequence, read N- to C-terminus: Large ribosomal subunit protein uL24 (105 aa).

Belongs to the universal ribosomal protein uL24 family. As to quaternary structure, part of the 50S ribosomal subunit.

Functionally, one of two assembly initiator proteins, it binds directly to the 5'-end of the 23S rRNA, where it nucleates assembly of the 50S subunit. One of the proteins that surrounds the polypeptide exit tunnel on the outside of the subunit. The chain is Large ribosomal subunit protein uL24 from Clostridium botulinum (strain Langeland / NCTC 10281 / Type F).